A 167-amino-acid polypeptide reads, in one-letter code: Sperm acrosome membrane-associated protein 3 (167 aa).

The Cytoplasmic segment spans residues 1–63 (MVSALREAPL…EARSRALRRR (63 aa)). The helical; Signal-anchor for type II membrane protein transmembrane segment at 64-84 (WCPAGIILLALISLLSCLLPA) threads the bilayer. The Extracellular segment spans residues 85–167 (SEAKVYGRCE…VPNVCQMYCS (83 aa)). The C-type lysozyme domain occupies 88–167 (KVYGRCELAR…VPNVCQMYCS (80 aa)). Residues C151 and C166 are joined by a disulfide bond.

It belongs to the glycosyl hydrolase 22 family. Interacts with ASTL. In terms of processing, the processed form derives from the membrane form by proteolytic processing.

The protein localises to the cytoplasmic vesicle. It is found in the secretory vesicle. The protein resides in the acrosome membrane. Functionally, sperm surface membrane protein that may be involved in sperm-egg plasma membrane adhesion and fusion during fertilization. It could be a potential receptor for the egg oligosaccharide residue N-acetylglucosamine, which is present in the extracellular matrix over the egg plasma membrane. The processed form has no detectable bacteriolytic activity in vitro. In Pongo pygmaeus (Bornean orangutan), this protein is Sperm acrosome membrane-associated protein 3 (SPACA3).